The sequence spans 244 residues: Biosynthetic peptidoglycan transglycosylase (244 aa).

The chain crosses the membrane as a helical span at residues 25–45 (LLLLLAIALLYQSWFLLHIIY).

The protein belongs to the glycosyltransferase 51 family.

The protein resides in the cell inner membrane. The catalysed reaction is [GlcNAc-(1-&gt;4)-Mur2Ac(oyl-L-Ala-gamma-D-Glu-L-Lys-D-Ala-D-Ala)](n)-di-trans,octa-cis-undecaprenyl diphosphate + beta-D-GlcNAc-(1-&gt;4)-Mur2Ac(oyl-L-Ala-gamma-D-Glu-L-Lys-D-Ala-D-Ala)-di-trans,octa-cis-undecaprenyl diphosphate = [GlcNAc-(1-&gt;4)-Mur2Ac(oyl-L-Ala-gamma-D-Glu-L-Lys-D-Ala-D-Ala)](n+1)-di-trans,octa-cis-undecaprenyl diphosphate + di-trans,octa-cis-undecaprenyl diphosphate + H(+). The protein operates within cell wall biogenesis; peptidoglycan biosynthesis. In terms of biological role, peptidoglycan polymerase that catalyzes glycan chain elongation from lipid-linked precursors. This is Biosynthetic peptidoglycan transglycosylase from Nitrosomonas eutropha (strain DSM 101675 / C91 / Nm57).